The sequence spans 238 residues: ATP synthase subunit a (238 aa).

5 consecutive transmembrane segments (helical) span residues 18 to 38, 75 to 95, 112 to 132, 179 to 199, and 203 to 223; these read LTIL…VFWA, YSLL…LGLM, NFGV…IEGI, VVTG…PLAF, and IVWT…FIIL.

The protein belongs to the ATPase A chain family. In terms of assembly, F-type ATPases have 2 components, CF(1) - the catalytic core - and CF(0) - the membrane proton channel. CF(1) has five subunits: alpha(3), beta(3), gamma(1), delta(1), epsilon(1). CF(0) has three main subunits: a(1), b(2) and c(9-12). The alpha and beta chains form an alternating ring which encloses part of the gamma chain. CF(1) is attached to CF(0) by a central stalk formed by the gamma and epsilon chains, while a peripheral stalk is formed by the delta and b chains.

The protein localises to the cell membrane. In terms of biological role, key component of the proton channel; it plays a direct role in the translocation of protons across the membrane. The protein is ATP synthase subunit a of Streptococcus agalactiae serotype Ia (strain ATCC 27591 / A909 / CDC SS700).